We begin with the raw amino-acid sequence, 427 residues long: Serine--tRNA ligase (427 aa).

Residue 230–232 (TAE) coordinates L-serine. 261–263 (RAE) provides a ligand contact to ATP. Glu-284 provides a ligand contact to L-serine. 348–351 (EISS) contacts ATP. Ser-384 is a binding site for L-serine.

This sequence belongs to the class-II aminoacyl-tRNA synthetase family. Type-1 seryl-tRNA synthetase subfamily. As to quaternary structure, homodimer. The tRNA molecule binds across the dimer.

The protein resides in the cytoplasm. The enzyme catalyses tRNA(Ser) + L-serine + ATP = L-seryl-tRNA(Ser) + AMP + diphosphate + H(+). It carries out the reaction tRNA(Sec) + L-serine + ATP = L-seryl-tRNA(Sec) + AMP + diphosphate + H(+). Its pathway is aminoacyl-tRNA biosynthesis; selenocysteinyl-tRNA(Sec) biosynthesis; L-seryl-tRNA(Sec) from L-serine and tRNA(Sec): step 1/1. Functionally, catalyzes the attachment of serine to tRNA(Ser). Is also able to aminoacylate tRNA(Sec) with serine, to form the misacylated tRNA L-seryl-tRNA(Sec), which will be further converted into selenocysteinyl-tRNA(Sec). The chain is Serine--tRNA ligase from Syntrophomonas wolfei subsp. wolfei (strain DSM 2245B / Goettingen).